We begin with the raw amino-acid sequence, 78 residues long: Defensin-like protein 171 (78 aa).

A signal peptide spans 1–23; sequence MAKTASSLVLPIIFLVMFALVEQ. 4 cysteine pairs are disulfide-bonded: Cys-27–Cys-71, Cys-34–Cys-56, Cys-40–Cys-65, and Cys-44–Cys-67.

It belongs to the DEFL family.

The protein resides in the secreted. This is Defensin-like protein 171 (LCR61) from Arabidopsis thaliana (Mouse-ear cress).